The primary structure comprises 268 residues: MESSQAYFPPSANKKHVLLTWAQSINGRIGYVVESPSLGQLRLSSKESFVMTHLLRTKFDGIMVGSRTAENDNPSLTAKLPDPANPDCLLPLNKQPIPIIVDSNLRLDYASLKVIRLARERLGKPPLIIVAPSIWQQVQHDSKLKEAVKLIQSVGGRCIIRNEDSPDSWSDYVALDKLLQNGVNRIMVEGGAELLAKAFGSTDIDAYVVTIVPKIFSCSNTTEIKNLNNLNLTTNSHWYPCGPDVIFTNYSDEFYESYKSLLTNSDAI.

NADP(+)-binding positions include threonine 68, aspartate 72, 103–106 (SNLR), and 191–195 (GAELL).

Belongs to the HTP reductase family. As to quaternary structure, homodimer.

The catalysed reaction is 2,5-diamino-6-(1-D-ribitylamino)pyrimidin-4(3H)-one 5'-phosphate + NADP(+) = 2,5-diamino-6-(1-D-ribosylamino)pyrimidin-4(3H)-one 5'-phosphate + NADPH + H(+). The enzyme catalyses 2,5-diamino-6-(1-D-ribitylamino)pyrimidin-4(3H)-one 5'-phosphate + NAD(+) = 2,5-diamino-6-(1-D-ribosylamino)pyrimidin-4(3H)-one 5'-phosphate + NADH + H(+). It functions in the pathway cofactor biosynthesis; riboflavin biosynthesis. In terms of biological role, catalyzes an early step in riboflavin biosynthesis, the NADPH-dependent reduction of the ribose side chain of 2,5-diamino-6-ribosylamino-4(3H)-pyrimidinone 5'-phosphate, yielding 2,5-diamino-6-ribitylamino-4(3H)-pyrimidinone 5'-phosphate. This Schizosaccharomyces pombe (strain 972 / ATCC 24843) (Fission yeast) protein is 2,5-diamino-6-ribosylamino-4(3H)-pyrimidinone 5'-phosphate reductase.